Reading from the N-terminus, the 327-residue chain is o-succinylbenzoate synthase (327 aa).

Residue K110 is the Proton donor of the active site. Residues D138, E165, and D188 each contribute to the Mg(2+) site. K212 acts as the Proton acceptor in catalysis.

The protein belongs to the mandelate racemase/muconate lactonizing enzyme family. MenC type 1 subfamily. The cofactor is a divalent metal cation.

It carries out the reaction (1R,6R)-6-hydroxy-2-succinyl-cyclohexa-2,4-diene-1-carboxylate = 2-succinylbenzoate + H2O. The protein operates within quinol/quinone metabolism; 1,4-dihydroxy-2-naphthoate biosynthesis; 1,4-dihydroxy-2-naphthoate from chorismate: step 4/7. It participates in quinol/quinone metabolism; menaquinone biosynthesis. In terms of biological role, converts 2-succinyl-6-hydroxy-2,4-cyclohexadiene-1-carboxylate (SHCHC) to 2-succinylbenzoate (OSB). The protein is o-succinylbenzoate synthase of Mycobacterium marinum (strain ATCC BAA-535 / M).